A 201-amino-acid chain; its full sequence is Large ribosomal subunit protein uL4 (201 aa).

A disordered region spans residues 46–71 (QKTRAEITGSGKKPWRQKGTGRARSG).

It belongs to the universal ribosomal protein uL4 family. Part of the 50S ribosomal subunit.

In terms of biological role, one of the primary rRNA binding proteins, this protein initially binds near the 5'-end of the 23S rRNA. It is important during the early stages of 50S assembly. It makes multiple contacts with different domains of the 23S rRNA in the assembled 50S subunit and ribosome. Forms part of the polypeptide exit tunnel. The chain is Large ribosomal subunit protein uL4 from Klebsiella pneumoniae (strain 342).